The sequence spans 339 residues: NADH-quinone oxidoreductase subunit H (339 aa).

9 helical membrane passes run 9–29, 50–70, 82–102, 115–135, 161–181, 187–207, 235–255, 275–295, and 311–331; these read IFPL…LILC, PNVV…KLLF, ILFV…WAVI, VGVL…IIAG, MGLV…SQIV, MPWW…ISVL, MGFA…SAMT, IPGF…FLWI, and GWKV…SVLI.

Belongs to the complex I subunit 1 family. In terms of assembly, NDH-1 is composed of 14 different subunits. Subunits NuoA, H, J, K, L, M, N constitute the membrane sector of the complex.

Its subcellular location is the cell inner membrane. It carries out the reaction a quinone + NADH + 5 H(+)(in) = a quinol + NAD(+) + 4 H(+)(out). In terms of biological role, NDH-1 shuttles electrons from NADH, via FMN and iron-sulfur (Fe-S) centers, to quinones in the respiratory chain. The immediate electron acceptor for the enzyme in this species is believed to be ubiquinone. Couples the redox reaction to proton translocation (for every two electrons transferred, four hydrogen ions are translocated across the cytoplasmic membrane), and thus conserves the redox energy in a proton gradient. This subunit may bind ubiquinone. In Rickettsia bellii (strain RML369-C), this protein is NADH-quinone oxidoreductase subunit H.